Reading from the N-terminus, the 190-residue chain is RRP15-like protein (190 aa).

Positions 1-11 are enriched in basic and acidic residues; it reads MSTKNRDRLVV. Disordered stretches follow at residues 1 to 69 and 119 to 190; these read MSTK…TRKE and QKTM…SDED. The segment covering 55–66 has biased composition (basic residues); it reads QRKKKKVIKKLT. A coiled-coil region spans residues 59–84; it reads KKVIKKLTRKEQSLKHSVKEYRIKLA. The span at 119-153 shows a compositional bias: basic and acidic residues; sequence QKTMSDAVKEKMTARDRKEARERFDGKNFDSDKFA. Over residues 167–190 the composition is skewed to acidic residues; the sequence is GEEEDEQMNIGDDEIDAGNYSDED.

It belongs to the RRP15 family.

This Caenorhabditis briggsae protein is RRP15-like protein.